The primary structure comprises 120 residues: UPF0231 protein KPK_4613 (120 aa).

It belongs to the UPF0231 family.

The polypeptide is UPF0231 protein KPK_4613 (Klebsiella pneumoniae (strain 342)).